The primary structure comprises 357 residues: Neuronal-specific septin-3 (357 aa).

The span at methionine 1–threonine 10 shows a compositional bias: basic and acidic residues. The segment at methionine 1–methionine 29 is disordered. The Septin-type G domain maps to threonine 58–aspartate 330. The segment at glycine 68–serine 75 is G1 motif. GTP is bound at residue glycine 68–serine 75. The residue at position 91 (serine 91) is a Phosphoserine. Residue threonine 102 coordinates GTP. The G3 motif stretch occupies residues aspartate 125–glycine 128. The interval alanine 207–aspartate 210 is G4 motif. Residues lysine 208–glutamate 216, glycine 264, and arginine 279 contribute to the GTP site.

It belongs to the TRAFAC class TrmE-Era-EngA-EngB-Septin-like GTPase superfamily. Septin GTPase family. In terms of assembly, septins polymerize into heterooligomeric protein complexes that form filaments, and can associate with cellular membranes, actin filaments and microtubules. GTPase activity is required for filament formation. Phosphorylated by PKG on serine residues. Phosphorylated by PKG on Ser-91.

The protein localises to the cytoplasm. The protein resides in the cytoskeleton. It is found in the synapse. In terms of biological role, filament-forming cytoskeletal GTPase. May play a role in cytokinesis (Potential). This is Neuronal-specific septin-3 from Bos taurus (Bovine).